Consider the following 97-residue polypeptide: Ig heavy chain V region 914 (97 aa).

The 97-residue stretch at 1 to 97 folds into the Ig-like domain; that stretch reads EVKLVESGGG…EDTAMYYCAR (97 aa).

This chain is Ig heavy chain V region 914, found in Mus musculus (Mouse).